The sequence spans 315 residues: Ribosomal RNA small subunit methyltransferase H (315 aa).

S-adenosyl-L-methionine is bound by residues 37–39 (GGH), Asp57, Phe83, Asp105, and Gln112.

This sequence belongs to the methyltransferase superfamily. RsmH family.

The protein resides in the cytoplasm. It catalyses the reaction cytidine(1402) in 16S rRNA + S-adenosyl-L-methionine = N(4)-methylcytidine(1402) in 16S rRNA + S-adenosyl-L-homocysteine + H(+). Specifically methylates the N4 position of cytidine in position 1402 (C1402) of 16S rRNA. The polypeptide is Ribosomal RNA small subunit methyltransferase H (Pseudomonas putida (strain ATCC 700007 / DSM 6899 / JCM 31910 / BCRC 17059 / LMG 24140 / F1)).